The sequence spans 461 residues: Photosystem II CP43 reaction center protein (461 aa).

A propeptide spanning residues methionine 1–glutamate 2 is cleaved from the precursor. N-acetylthreonine is present on threonine 3. Threonine 3 bears the Phosphothreonine mark. Helical transmembrane passes span leucine 57–alanine 81, leucine 122–asparagine 143, lysine 166–serine 188, lysine 243–serine 263, and tryptophan 279–alanine 300. Glutamate 355 provides a ligand contact to [CaMn4O5] cluster. A helical transmembrane segment spans residues arginine 435 to proline 459.

This sequence belongs to the PsbB/PsbC family. PsbC subfamily. PSII is composed of 1 copy each of membrane proteins PsbA, PsbB, PsbC, PsbD, PsbE, PsbF, PsbH, PsbI, PsbJ, PsbK, PsbL, PsbM, PsbT, PsbX, PsbY, PsbZ, Psb30/Ycf12, at least 3 peripheral proteins of the oxygen-evolving complex and a large number of cofactors. It forms dimeric complexes. Binds multiple chlorophylls and provides some of the ligands for the Ca-4Mn-5O cluster of the oxygen-evolving complex. It may also provide a ligand for a Cl- that is required for oxygen evolution. PSII binds additional chlorophylls, carotenoids and specific lipids. is required as a cofactor.

Its subcellular location is the plastid. It localises to the chloroplast thylakoid membrane. Functionally, one of the components of the core complex of photosystem II (PSII). It binds chlorophyll and helps catalyze the primary light-induced photochemical processes of PSII. PSII is a light-driven water:plastoquinone oxidoreductase, using light energy to abstract electrons from H(2)O, generating O(2) and a proton gradient subsequently used for ATP formation. The polypeptide is Photosystem II CP43 reaction center protein (Oltmannsiellopsis viridis (Marine flagellate)).